We begin with the raw amino-acid sequence, 533 residues long: Probable protein kinase UbiB (533 aa).

A helical membrane pass occupies residues 24–44 (LILELPMLPWWLRLLGATLPW). Residues 126-494 (RFEREPLASA…WKGSRHDWLG (369 aa)) form the Protein kinase domain. ATP-binding positions include 132-140 (LASASVAQV) and lysine 154. Aspartate 289 (proton acceptor) is an active-site residue. A helical transmembrane segment spans residues 510 to 530 (LGQQLEAWPAWVMLAGGVFLI).

It belongs to the ABC1 family. UbiB subfamily.

Its subcellular location is the cell inner membrane. It functions in the pathway cofactor biosynthesis; ubiquinone biosynthesis [regulation]. In terms of biological role, is probably a protein kinase regulator of UbiI activity which is involved in aerobic coenzyme Q (ubiquinone) biosynthesis. This is Probable protein kinase UbiB from Pseudomonas aeruginosa (strain LESB58).